The following is a 2282-amino-acid chain: Protein Ycf2 (2282 aa).

Residue 1637–1644 (GSIGTGRS) participates in ATP binding.

It belongs to the Ycf2 family.

The protein resides in the plastid. Its subcellular location is the chloroplast stroma. In terms of biological role, probable ATPase of unknown function. Its presence in a non-photosynthetic plant (Epifagus virginiana) and experiments in tobacco indicate that it has an essential function which is probably not related to photosynthesis. This Citrus sinensis (Sweet orange) protein is Protein Ycf2.